Reading from the N-terminus, the 106-residue chain is Small ribosomal subunit protein uS10 (106 aa).

The protein belongs to the universal ribosomal protein uS10 family. In terms of assembly, part of the 30S ribosomal subunit.

Involved in the binding of tRNA to the ribosomes. In Prochlorococcus marinus (strain MIT 9303), this protein is Small ribosomal subunit protein uS10.